A 132-amino-acid chain; its full sequence is uncharacterized protein (132 aa).

WD repeat units follow at residues 14 to 53 (DLQD…LEIL) and 58 to 97 (AHDD…LANV).

This is an uncharacterized protein from Acanthamoeba polyphaga (Amoeba).